The following is a 172-amino-acid chain: Small ribosomal subunit protein uS5 (172 aa).

Residues 16–79 form the S5 DRBM domain; sequence LKEKLVHINR…EDGKKNVVKV (64 aa).

The protein belongs to the universal ribosomal protein uS5 family. In terms of assembly, part of the 30S ribosomal subunit. Contacts proteins S4 and S8.

Its function is as follows. With S4 and S12 plays an important role in translational accuracy. In terms of biological role, located at the back of the 30S subunit body where it stabilizes the conformation of the head with respect to the body. This Prosthecochloris aestuarii (strain DSM 271 / SK 413) protein is Small ribosomal subunit protein uS5.